The primary structure comprises 254 residues: Persulfide dioxygenase ETHE1, mitochondrial (254 aa).

The transit peptide at 1-7 directs the protein to the mitochondrion; it reads MASAVVR. Residues Ser-14, Ser-17, and Ser-19 each carry the phosphoserine modification. The residue at position 32 (Lys-32) is an N6-acetyllysine; alternate. N6-succinyllysine; alternate is present on Lys-32. Lys-66 is subject to N6-acetyllysine. Positions 79, 135, and 154 each coordinate Fe cation. Lys-172 carries the post-translational modification N6-acetyllysine; alternate. An N6-succinyllysine; alternate modification is found at Lys-172.

This sequence belongs to the metallo-beta-lactamase superfamily. Glyoxalase II family. Homodimer. Monomer. Interacts with TST. May interact with RELA. Fe(2+) serves as cofactor.

It is found in the cytoplasm. Its subcellular location is the nucleus. The protein resides in the mitochondrion matrix. The catalysed reaction is S-sulfanylglutathione + O2 + H2O = sulfite + glutathione + 2 H(+). First described as a protein that can shuttle between the nucleus and the cytoplasm and suppress p53-induced apoptosis by sequestering the transcription factor RELA/NFKB3 in the cytoplasm and preventing its accumulation in the nucleus. Sulfur dioxygenase that plays an essential role in hydrogen sulfide catabolism in the mitochondrial matrix. Hydrogen sulfide (H(2)S) is first oxidized by SQRDL, giving rise to cysteine persulfide residues. ETHE1 consumes molecular oxygen to catalyze the oxidation of the persulfide, once it has been transferred to a thiophilic acceptor, such as glutathione (R-SSH). Plays an important role in metabolic homeostasis in mitochondria by metabolizing hydrogen sulfide and preventing the accumulation of supraphysiological H(2)S levels that have toxic effects, due to the inhibition of cytochrome c oxidase. The polypeptide is Persulfide dioxygenase ETHE1, mitochondrial (Ethe1) (Mus musculus (Mouse)).